A 701-amino-acid polypeptide reads, in one-letter code: Glycine--tRNA ligase beta subunit (701 aa).

This sequence belongs to the class-II aminoacyl-tRNA synthetase family. In terms of assembly, tetramer of two alpha and two beta subunits.

The protein localises to the cytoplasm. It catalyses the reaction tRNA(Gly) + glycine + ATP = glycyl-tRNA(Gly) + AMP + diphosphate. The polypeptide is Glycine--tRNA ligase beta subunit (Nitratidesulfovibrio vulgaris (strain DSM 19637 / Miyazaki F) (Desulfovibrio vulgaris)).